Here is a 208-residue protein sequence, read N- to C-terminus: Cytochrome c biogenesis ATP-binding export protein CcmA (208 aa).

Positions 2 to 206 (LEAKELTCAR…IRLTAEGRDE (205 aa)) constitute an ABC transporter domain. An ATP-binding site is contributed by 34 to 41 (GPNGAGKT).

This sequence belongs to the ABC transporter superfamily. CcmA exporter (TC 3.A.1.107) family. In terms of assembly, the complex is composed of two ATP-binding proteins (CcmA) and two transmembrane proteins (CcmB).

The protein localises to the cell inner membrane. The catalysed reaction is heme b(in) + ATP + H2O = heme b(out) + ADP + phosphate + H(+). In terms of biological role, part of the ABC transporter complex CcmAB involved in the biogenesis of c-type cytochromes; once thought to export heme, this seems not to be the case, but its exact role is uncertain. Responsible for energy coupling to the transport system. The chain is Cytochrome c biogenesis ATP-binding export protein CcmA from Tatumella citrea (Pantoea citrea).